Consider the following 227-residue polypeptide: Small ribosomal subunit protein uS3 (227 aa).

The 71-residue stretch at Leu24–Pro94 folds into the KH type-2 domain. The interval Glu207–Ala227 is disordered.

It belongs to the universal ribosomal protein uS3 family. In terms of assembly, part of the 30S ribosomal subunit.

In terms of biological role, binds the lower part of the 30S subunit head. The polypeptide is Small ribosomal subunit protein uS3 (Methanopyrus kandleri (strain AV19 / DSM 6324 / JCM 9639 / NBRC 100938)).